A 61-amino-acid chain; its full sequence is MDPNCSCATDGSCSCAGSCKCKECKCTTCKKSCCSCCPVGCAKCSQGCVCKEASDKCSCCA.

Methionine 1 bears the N-acetylmethionine mark. Positions 1-29 (MDPNCSCATDGSCSCAGSCKCKECKCTTC) are beta. A divalent metal cation-binding residues include cysteine 5, cysteine 7, cysteine 13, cysteine 15, cysteine 19, cysteine 21, cysteine 24, cysteine 26, cysteine 29, cysteine 33, cysteine 34, cysteine 36, cysteine 37, cysteine 41, cysteine 44, cysteine 48, cysteine 50, and cysteine 57. Positions 30 to 61 (KKSCCSCCPVGCAKCSQGCVCKEASDKCSCCA) are alpha. The residue at position 58 (serine 58) is a Phosphoserine. 2 residues coordinate a divalent metal cation: cysteine 59 and cysteine 60.

It belongs to the metallothionein superfamily. Type 1 family.

In terms of biological role, metallothioneins have a high content of cysteine residues that bind various heavy metals; these proteins are transcriptionally regulated by both heavy metals and glucocorticoids. The chain is Metallothionein-2 (MT2) from Cricetulus griseus (Chinese hamster).